The primary structure comprises 202 residues: Dephospho-CoA kinase (202 aa).

One can recognise a DPCK domain in the interval 6–202 (KVSITGDLSS…EYFYALKGAL (197 aa)). 14–19 (SSGKTE) provides a ligand contact to ATP.

The protein belongs to the CoaE family.

It localises to the cytoplasm. The enzyme catalyses 3'-dephospho-CoA + ATP = ADP + CoA + H(+). Its pathway is cofactor biosynthesis; coenzyme A biosynthesis; CoA from (R)-pantothenate: step 5/5. In terms of biological role, catalyzes the phosphorylation of the 3'-hydroxyl group of dephosphocoenzyme A to form coenzyme A. The protein is Dephospho-CoA kinase of Chlamydia pneumoniae (Chlamydophila pneumoniae).